Reading from the N-terminus, the 148-residue chain is Vascular endothelial growth factor homolog (148 aa).

The first 25 residues, 1–25 (MKLTATLQVVVALLICMYNLPECVS), serve as a signal peptide directing secretion. Intrachain disulfides connect cysteine 46–cysteine 88, cysteine 77–cysteine 130, and cysteine 81–cysteine 132. Asparagine 95 carries an N-linked (GlcNAc...) asparagine; by host glycan.

The protein belongs to the PDGF/VEGF growth factor family. Homodimer; disulfide-linked.

It localises to the secreted. Its function is as follows. Induces endothelial proliferation. This is Vascular endothelial growth factor homolog from Orf virus (strain NZ7) (OV NZ-7).